The sequence spans 438 residues: AP-2 complex subunit mu (438 aa).

An MHD domain is found at 177 to 437 (KNEVFLDIVE…ITKAGSYEIR (261 aa)).

Belongs to the adaptor complexes medium subunit family. Adaptor protein complex 2 (AP-2) is a heterotetramer composed of two large adaptins (alpha-type and beta-type subunits), a medium adaptin (mu-type subunit) and a small adaptin (sigma-type subunit).

It localises to the cell membrane. The protein resides in the membrane. The protein localises to the coated pit. It is found in the golgi apparatus. Its subcellular location is the trans-Golgi network membrane. Functionally, subunit of the adaptor protein complex 2 (AP-2). Adaptor protein complexes function in protein transport via transport vesicles in different membrane traffic pathways. Adaptor protein complexes are vesicle coat components and appear to be involved in cargo selection and vesicle formation. AP-2 is involved in clathrin-dependent endocytosis in which cargo proteins are incorporated into vesicles surrounded by clathrin (clathrin-coated vesicles, CCVs) which are destined for fusion with the early endosome. AP-2 recognizes Y-X-X-Phi endocytosis signal motif within the cytosolic tails of transmembrane cargo molecules. The complex binds polyphosphoinositides. The polypeptide is AP-2 complex subunit mu (AP2M) (Arabidopsis thaliana (Mouse-ear cress)).